The sequence spans 176 residues: dCTP deaminase (176 aa).

Residues 99–104 (RSTLAR) and Asp115 contribute to the dCTP site. Catalysis depends on Glu125, which acts as the Proton donor/acceptor. DCTP is bound at residue Gln163.

It belongs to the dCTP deaminase family. In terms of assembly, homotrimer.

It carries out the reaction dCTP + H2O + H(+) = dUTP + NH4(+). The protein operates within pyrimidine metabolism; dUMP biosynthesis; dUMP from dCTP (dUTP route): step 1/2. Catalyzes the deamination of dCTP to dUTP. This is dCTP deaminase from Pyrobaculum calidifontis (strain DSM 21063 / JCM 11548 / VA1).